Here is a 439-residue protein sequence, read N- to C-terminus: Fibroleukin (439 aa).

The first 23 residues, 1–23, serve as a signal peptide directing secretion; it reads MKLANWYWLSSAVLATYGFLVVA. Residue N25 is glycosylated (N-linked (GlcNAc...) asparagine). Residues 73 to 165 are a coiled coil; the sequence is SRIEEVFKEV…GRLEKLNLVN (93 aa). Positions 103-126 are disordered; the sequence is ADDNGDPGRNGLLLPSTGAPGEVG. N179, N235, N263, and N336 each carry an N-linked (GlcNAc...) asparagine glycan. The region spanning 204-436 is the Fibrinogen C-terminal domain; sequence PVQHLIYKDC…EAKMMIRPKH (233 aa). Cysteines 213 and 242 form a disulfide. C371 and C384 are oxidised to a cystine.

As to quaternary structure, homotetramer; disulfide-linked. Constitutively expressed in cytotoxic T-cells.

It is found in the secreted. Functionally, may play a role in physiologic lymphocyte functions at mucosal sites. This Homo sapiens (Human) protein is Fibroleukin (FGL2).